The primary structure comprises 125 residues: Acyl carrier protein, mitochondrial (125 aa).

The N-terminal 36 residues, 1–36 (MFRSVCRISSRVAPSAYRTIMGRSVMSNTILAQRFY), are a transit peptide targeting the mitochondrion. The Carrier domain maps to 43–122 (DQVSQRVIDV…ETVDYIASNP (80 aa)). Serine 82 carries the O-(pantetheine 4'-phosphoryl)serine modification.

This sequence belongs to the acyl carrier protein (ACP) family. Complex I is composed of about 30 different subunits. 4'-phosphopantetheine is transferred from CoA to a specific serine of apo-ACP by acpS. This modification is essential for activity because fatty acids are bound in thioester linkage to the sulfhydryl of the prosthetic group.

Its subcellular location is the mitochondrion. It functions in the pathway lipid metabolism; fatty acid biosynthesis. Carrier of the growing fatty acid chain in fatty acid biosynthesis. May be involved in the synthesis of very-long-chain fatty acids. Accessory and non-catalytic subunit of the mitochondrial membrane respiratory chain NADH dehydrogenase (Complex I), which functions in the transfer of electrons from NADH to the respiratory chain. The protein is Acyl carrier protein, mitochondrial (ACP1) of Saccharomyces cerevisiae (strain ATCC 204508 / S288c) (Baker's yeast).